We begin with the raw amino-acid sequence, 289 residues long: tRNA-cytidine(32) 2-sulfurtransferase (289 aa).

The PP-loop motif motif lies at 39 to 44 (SGGKDS). The [4Fe-4S] cluster site is built by Cys114, Cys117, and Cys205.

Belongs to the TtcA family. Homodimer. Mg(2+) serves as cofactor. The cofactor is [4Fe-4S] cluster.

The protein resides in the cytoplasm. It catalyses the reaction cytidine(32) in tRNA + S-sulfanyl-L-cysteinyl-[cysteine desulfurase] + AH2 + ATP = 2-thiocytidine(32) in tRNA + L-cysteinyl-[cysteine desulfurase] + A + AMP + diphosphate + H(+). Its pathway is tRNA modification. Its function is as follows. Catalyzes the ATP-dependent 2-thiolation of cytidine in position 32 of tRNA, to form 2-thiocytidine (s(2)C32). The sulfur atoms are provided by the cysteine/cysteine desulfurase (IscS) system. In Deinococcus geothermalis (strain DSM 11300 / CIP 105573 / AG-3a), this protein is tRNA-cytidine(32) 2-sulfurtransferase.